The chain runs to 423 residues: Gamma-glutamyl phosphate reductase (423 aa).

It belongs to the gamma-glutamyl phosphate reductase family.

The protein resides in the cytoplasm. The enzyme catalyses L-glutamate 5-semialdehyde + phosphate + NADP(+) = L-glutamyl 5-phosphate + NADPH + H(+). It participates in amino-acid biosynthesis; L-proline biosynthesis; L-glutamate 5-semialdehyde from L-glutamate: step 2/2. Its function is as follows. Catalyzes the NADPH-dependent reduction of L-glutamate 5-phosphate into L-glutamate 5-semialdehyde and phosphate. The product spontaneously undergoes cyclization to form 1-pyrroline-5-carboxylate. In Paraburkholderia phymatum (strain DSM 17167 / CIP 108236 / LMG 21445 / STM815) (Burkholderia phymatum), this protein is Gamma-glutamyl phosphate reductase.